A 122-amino-acid polypeptide reads, in one-letter code: Basic phospholipase A2 homolog (122 aa).

7 disulfides stabilise this stretch: Cys-26–Cys-115, Cys-28–Cys-44, Cys-43–Cys-95, Cys-49–Cys-122, Cys-50–Cys-88, Cys-57–Cys-81, and Cys-75–Cys-86. The interval Lys-105–Ser-117 is important for membrane-damaging activities in eukaryotes and bacteria; heparin-binding.

This sequence belongs to the phospholipase A2 family. Group II subfamily. N49 sub-subfamily. In terms of tissue distribution, expressed by the venom gland.

It localises to the secreted. The protein is Basic phospholipase A2 homolog of Gloydius halys (Chinese water mocassin).